We begin with the raw amino-acid sequence, 109 residues long: Phosphoribosyl-ATP pyrophosphatase (109 aa).

It belongs to the PRA-PH family.

It localises to the cytoplasm. The catalysed reaction is 1-(5-phospho-beta-D-ribosyl)-ATP + H2O = 1-(5-phospho-beta-D-ribosyl)-5'-AMP + diphosphate + H(+). Its pathway is amino-acid biosynthesis; L-histidine biosynthesis; L-histidine from 5-phospho-alpha-D-ribose 1-diphosphate: step 2/9. The protein is Phosphoribosyl-ATP pyrophosphatase of Alkalilimnicola ehrlichii (strain ATCC BAA-1101 / DSM 17681 / MLHE-1).